The sequence spans 145 residues: Ribonuclease VapC24 (145 aa).

The region spanning 4-123 (IDTNILLYAQ…RHHGVDEFAT (120 aa)) is the PINc domain. Mg(2+) is bound by residues Asp5 and Asp106.

Belongs to the PINc/VapC protein family. The cofactor is Mg(2+).

In terms of biological role, toxic component of a type II toxin-antitoxin (TA) system. An RNase. Its cognate antitoxin is VapB24. This chain is Ribonuclease VapC24, found in Mycobacterium tuberculosis (strain CDC 1551 / Oshkosh).